Here is a 341-residue protein sequence, read N- to C-terminus: tRNA (cytidine(56)-2'-O)-methyltransferase (341 aa).

S-adenosyl-L-methionine is bound by residues Leu-79 and 104-108 (GAEKV). The HD domain maps to 187-294 (IIRHVETVYK…VAHADNLVSM (108 aa)).

This sequence belongs to the aTrm56 family. Homodimer.

It is found in the cytoplasm. It catalyses the reaction cytidine(56) in tRNA + S-adenosyl-L-methionine = 2'-O-methylcytidine(56) in tRNA + S-adenosyl-L-homocysteine + H(+). In terms of biological role, specifically catalyzes the AdoMet-dependent 2'-O-ribose methylation of cytidine at position 56 in tRNAs. This is tRNA (cytidine(56)-2'-O)-methyltransferase from Picrophilus torridus (strain ATCC 700027 / DSM 9790 / JCM 10055 / NBRC 100828 / KAW 2/3).